Consider the following 172-residue polypeptide: Lipoprotein signal peptidase (172 aa).

The next 4 helical transmembrane spans lie at 12–32 (TSAA…VILF), 43–63 (VFAY…LVYN), 77–97 (WQRW…CYLL), and 102–122 (GQKM…GNVI). Active-site residues include Asp132 and Asp150. The helical transmembrane segment at 142–162 (HWPAFNLADSAITVGAVLLVL) threads the bilayer.

It belongs to the peptidase A8 family.

It localises to the cell inner membrane. It carries out the reaction Release of signal peptides from bacterial membrane prolipoproteins. Hydrolyzes -Xaa-Yaa-Zaa-|-(S,diacylglyceryl)Cys-, in which Xaa is hydrophobic (preferably Leu), and Yaa (Ala or Ser) and Zaa (Gly or Ala) have small, neutral side chains.. The protein operates within protein modification; lipoprotein biosynthesis (signal peptide cleavage). In terms of biological role, this protein specifically catalyzes the removal of signal peptides from prolipoproteins. This chain is Lipoprotein signal peptidase, found in Paraburkholderia phytofirmans (strain DSM 17436 / LMG 22146 / PsJN) (Burkholderia phytofirmans).